The chain runs to 312 residues: Ribosomal protein L11 methyltransferase (312 aa).

The S-adenosyl-L-methionine site is built by Thr162, Gly183, Asp205, and Asn248.

This sequence belongs to the methyltransferase superfamily. PrmA family.

It localises to the cytoplasm. It catalyses the reaction L-lysyl-[protein] + 3 S-adenosyl-L-methionine = N(6),N(6),N(6)-trimethyl-L-lysyl-[protein] + 3 S-adenosyl-L-homocysteine + 3 H(+). In terms of biological role, methylates ribosomal protein L11. The sequence is that of Ribosomal protein L11 methyltransferase from Bacillus anthracis (strain A0248).